A 347-amino-acid polypeptide reads, in one-letter code: L-Ala-D/L-amino acid epimerase (347 aa).

156 to 158 (KLK) contacts substrate. The Mg(2+) site is built by Asp-183, Glu-211, and Asp-237. Residues Lys-259 and 309–311 (DID) contribute to the substrate site.

Belongs to the mandelate racemase/muconate lactonizing enzyme family. Mg(2+) serves as cofactor.

Functionally, dipeptide epimerase with a broad substrate specificity. Catalyzes the epimerization of L-Ala-L-Ala, L-Ala-L-Ser, L-Ala-L-Thr, L-Ala-L-Met, L-Ala-L-Phe, L-Ala-L-Tyr, L-Gly-L-Asp, L-Val-L-Asp, L-Val-L-Glu and L-Val-L-Phe (in vitro). Can also catalyze the epimerization of L-Ala-L-Glu, but with lower efficiency. This is L-Ala-D/L-amino acid epimerase from Pedosphaera parvula (strain Ellin514).